Here is a 309-residue protein sequence, read N- to C-terminus: Jacalin-related lectin 25 (309 aa).

Residues 8-190 enclose the Jacalin-type lectin domain; that stretch reads MFKVGPIGSQ…LTSIGIYVCP (183 aa).

The protein belongs to the jacalin lectin family.

The chain is Jacalin-related lectin 25 (JAL25) from Arabidopsis thaliana (Mouse-ear cress).